Consider the following 361-residue polypeptide: Phospho-N-acetylmuramoyl-pentapeptide-transferase (361 aa).

The next 10 membrane-spanning stretches (helical) occupy residues 25-45 (RGIL…PAVI), 73-93 (TMGG…WGDL), 98-118 (VWLV…DDWI), 139-159 (IFGL…AAIT), 168-188 (IALP…IVGF), 200-220 (GLAI…AYAS), 237-257 (AGEL…FLWF), 264-284 (VFMG…IAVI), 289-309 (MVLV…IIQV), and 339-359 (VIVR…ATLK).

Belongs to the glycosyltransferase 4 family. MraY subfamily. Requires Mg(2+) as cofactor.

The protein localises to the cell inner membrane. It carries out the reaction UDP-N-acetyl-alpha-D-muramoyl-L-alanyl-gamma-D-glutamyl-meso-2,6-diaminopimeloyl-D-alanyl-D-alanine + di-trans,octa-cis-undecaprenyl phosphate = di-trans,octa-cis-undecaprenyl diphospho-N-acetyl-alpha-D-muramoyl-L-alanyl-D-glutamyl-meso-2,6-diaminopimeloyl-D-alanyl-D-alanine + UMP. It functions in the pathway cell wall biogenesis; peptidoglycan biosynthesis. In terms of biological role, catalyzes the initial step of the lipid cycle reactions in the biosynthesis of the cell wall peptidoglycan: transfers peptidoglycan precursor phospho-MurNAc-pentapeptide from UDP-MurNAc-pentapeptide onto the lipid carrier undecaprenyl phosphate, yielding undecaprenyl-pyrophosphoryl-MurNAc-pentapeptide, known as lipid I. The protein is Phospho-N-acetylmuramoyl-pentapeptide-transferase of Xanthomonas oryzae pv. oryzae (strain PXO99A).